We begin with the raw amino-acid sequence, 232 residues long: Fibrillarin-like rRNA/tRNA 2'-O-methyltransferase (232 aa).

S-adenosyl-L-methionine contacts are provided by residues 87 to 88 (TT), 105 to 106 (EF), 130 to 131 (DA), and 150 to 153 (DVAQ).

Belongs to the methyltransferase superfamily. Fibrillarin family. As to quaternary structure, interacts with nop5. Component of box C/D small ribonucleoprotein (sRNP) particles that contain rpl7ae, FlpA and nop5, plus a guide RNA.

Involved in pre-rRNA and tRNA processing. Utilizes the methyl donor S-adenosyl-L-methionine to catalyze the site-specific 2'-hydroxyl methylation of ribose moieties in rRNA and tRNA. Site specificity is provided by a guide RNA that base pairs with the substrate. Methylation occurs at a characteristic distance from the sequence involved in base pairing with the guide RNA. The protein is Fibrillarin-like rRNA/tRNA 2'-O-methyltransferase of Methanococcus maripaludis (strain C7 / ATCC BAA-1331).